Consider the following 526-residue polypeptide: Germ cell-less protein-like 2 (526 aa).

A disordered region spans residues 1–85 (MGSSSSRVLG…DKQQPLLNTP (85 aa)). The short motif at 49-55 (SHKRKRS) is the Nuclear localization signal element. Residues 62-77 (CDPDSHREEHEEEGDK) are compositionally biased toward basic and acidic residues. Positions 85 to 91 (PARKKLR) match the Nuclear localization signal motif. Residues 108–178 (SDIKICALGE…LYRDDVLIKP (71 aa)) enclose the BTB domain.

As to quaternary structure, interacts with CUL3. As to expression, expressed predominantly in testis.

It is found in the nucleus matrix. Its pathway is protein modification; protein ubiquitination. In terms of biological role, possible function in spermatogenesis. Probable substrate-specific adapter of an E3 ubiquitin-protein ligase complex which mediates the ubiquitination and subsequent proteasomal degradation of target proteins. The chain is Germ cell-less protein-like 2 from Homo sapiens (Human).